The sequence spans 287 residues: MAVGKEIKTQIASIKSTQKITSAMQLVAASKMRKAQQRMAAGRPYADRIRSVISHIATANPEYRHLYLQEREAKRVGYIVVSTDRGLCGGLNVNAFREMMRSMKEWRDKGAEVDLCAVGQKAISFFRNYGGNVVAALSHLGDDPSLTKIVGSVKVMLDAYAEGKIDRLYLVHNRFVNTMTQKPTVAQLLPLPPAEDDEMIRRHWDYIYEPDAKGLLDGLLTRFIESQVYQAVVENNACEQAARMIAMKSATDNAGGIINELELAYNKARQAAITQEISEIVSGAAAV.

This sequence belongs to the ATPase gamma chain family. In terms of assembly, F-type ATPases have 2 components, CF(1) - the catalytic core - and CF(0) - the membrane proton channel. CF(1) has five subunits: alpha(3), beta(3), gamma(1), delta(1), epsilon(1). CF(0) has three main subunits: a, b and c.

Its subcellular location is the cell inner membrane. Produces ATP from ADP in the presence of a proton gradient across the membrane. The gamma chain is believed to be important in regulating ATPase activity and the flow of protons through the CF(0) complex. This Hahella chejuensis (strain KCTC 2396) protein is ATP synthase gamma chain.